The sequence spans 340 residues: uncharacterized protein (340 aa).

Residues 6–26 traverse the membrane as a helical segment; the sequence is ITFGLLVLMVCVILFVLYVQL.

It localises to the cell membrane. This is an uncharacterized protein from Bacillus subtilis (strain 168).